A 325-amino-acid chain; its full sequence is UPF0324 membrane protein Bd1437 (325 aa).

The next 8 helical transmembrane spans lie at 21 to 43, 58 to 80, 87 to 105, 115 to 137, 144 to 166, 211 to 230, 243 to 260, and 302 to 324; these read IAAL…GIVL, YTHH…MVVG, IGYT…MLIG, STLI…APTI, VSVA…PWIG, ARAL…YFRG, PWFI…TWIP, and LQGV…IGWI.

Belongs to the UPF0324 family.

It localises to the cell membrane. This Bdellovibrio bacteriovorus (strain ATCC 15356 / DSM 50701 / NCIMB 9529 / HD100) protein is UPF0324 membrane protein Bd1437.